Consider the following 178-residue polypeptide: Large ribosomal subunit protein uL10 (178 aa).

It belongs to the universal ribosomal protein uL10 family. In terms of assembly, part of the ribosomal stalk of the 50S ribosomal subunit. The N-terminus interacts with L11 and the large rRNA to form the base of the stalk. The C-terminus forms an elongated spine to which L12 dimers bind in a sequential fashion forming a multimeric L10(L12)X complex.

Forms part of the ribosomal stalk, playing a central role in the interaction of the ribosome with GTP-bound translation factors. In Salinibacter ruber (strain DSM 13855 / M31), this protein is Large ribosomal subunit protein uL10.